A 194-amino-acid polypeptide reads, in one-letter code: Imidazoleglycerol-phosphate dehydratase (194 aa).

It belongs to the imidazoleglycerol-phosphate dehydratase family.

Its subcellular location is the cytoplasm. The catalysed reaction is D-erythro-1-(imidazol-4-yl)glycerol 3-phosphate = 3-(imidazol-4-yl)-2-oxopropyl phosphate + H2O. Its pathway is amino-acid biosynthesis; L-histidine biosynthesis; L-histidine from 5-phospho-alpha-D-ribose 1-diphosphate: step 6/9. This chain is Imidazoleglycerol-phosphate dehydratase, found in Rubrobacter xylanophilus (strain DSM 9941 / JCM 11954 / NBRC 16129 / PRD-1).